The chain runs to 312 residues: Lipid-translocating exporter-like protein RTA1 (312 aa).

The disordered stretch occupies residues 1-21; it reads MSPESKKITAHGSTSMPLSRT. Residues 11–21 show a composition bias toward polar residues; the sequence is HGSTSMPLSRT. The next 6 helical transmembrane spans lie at 29-49, 61-81, 103-123, 142-162, 183-203, and 223-243; these read IPLT…FFLA, LSTM…YFIC, FITF…LLAG, AMIT…SFHV, FMMV…RSAY, and SLML…ILPI. 2 N-linked (GlcNAc...) asparagine glycosylation sites follow: asparagine 258 and asparagine 304.

It belongs to the lipid-translocating exporter (LTE) (TC 9.A.26.1) family.

Its subcellular location is the membrane. It functions in the pathway siderophore biosynthesis. Lipid-translocating exporter-like protein; part of the gene cluster that mediates the biosynthesis of hydroxamate-containing siderophores that play a critical role in virulence via intracellular iron acquisition during macrophage infection. The polypeptide is Lipid-translocating exporter-like protein RTA1 (Ajellomyces capsulatus (Darling's disease fungus)).